We begin with the raw amino-acid sequence, 89 residues long: Small ribosomal subunit protein uS15 (89 aa).

Belongs to the universal ribosomal protein uS15 family. In terms of assembly, part of the 30S ribosomal subunit. Forms a bridge to the 50S subunit in the 70S ribosome, contacting the 23S rRNA.

Its function is as follows. One of the primary rRNA binding proteins, it binds directly to 16S rRNA where it helps nucleate assembly of the platform of the 30S subunit by binding and bridging several RNA helices of the 16S rRNA. In terms of biological role, forms an intersubunit bridge (bridge B4) with the 23S rRNA of the 50S subunit in the ribosome. In Pseudomonas putida (strain ATCC 700007 / DSM 6899 / JCM 31910 / BCRC 17059 / LMG 24140 / F1), this protein is Small ribosomal subunit protein uS15.